Reading from the N-terminus, the 494-residue chain is UDP-glucose 6-dehydrogenase (494 aa).

NAD(+) contacts are provided by residues 11–16 (GAGYVG), Asp36, Arg41, and 89–93 (VNTPT). The interval 88-110 (SVNTPTKTYGMGKGRAADLKYIE) is disordered. Lys107 is subject to N6-acetyllysine. Residues 129 to 135 (KSTVPVR) are allosteric switch region. 130-132 (STV) contributes to the NAD(+) binding site. Glu161 functions as the Proton donor/acceptor in the catalytic mechanism. Residues 161-165 (EFLAE), 220-224 (KLAAN), Arg260, and 267-273 (KASVGFG) contribute to the substrate site. An NAD(+)-binding site is contributed by Glu165. Residue Lys220 is the Proton donor/acceptor of the active site. Cys276 functions as the Nucleophile in the catalytic mechanism. 276-279 (CFQK) is an NAD(+) binding site. The important for formation of active hexamer structure stretch occupies residues 321–325 (SLFNT). 338 to 339 (FK) lines the substrate pocket. Arg346 contacts NAD(+). Arg442 lines the substrate pocket. The disordered stretch occupies residues 466 to 494 (VSSKRIPYAPSGEIPKFSLQDPPNKKPKV). Position 476 is a phosphoserine (Ser476).

This sequence belongs to the UDP-glucose/GDP-mannose dehydrogenase family. As to quaternary structure, homohexamer.

The catalysed reaction is UDP-alpha-D-glucose + 2 NAD(+) + H2O = UDP-alpha-D-glucuronate + 2 NADH + 3 H(+). It functions in the pathway nucleotide-sugar biosynthesis; UDP-alpha-D-glucuronate biosynthesis; UDP-alpha-D-glucuronate from UDP-alpha-D-glucose: step 1/1. Its activity is regulated as follows. UDP-alpha-D-xylose (UDX) acts as a feedback inhibitor. It binds at the same site as the substrate, but functions as allosteric inhibitor by triggering a conformation change that disrupts the active hexameric ring structure and gives rise to an inactive, horseshoe-shaped hexamer. Catalyzes the formation of UDP-alpha-D-glucuronate, a constituent of complex glycosaminoglycans. Required for the biosynthesis of chondroitin sulfate and heparan sulfate. Required for embryonic development via its role in the biosynthesis of glycosaminoglycans. Required for proper brain and neuronal development. This is UDP-glucose 6-dehydrogenase (UGDH) from Pongo abelii (Sumatran orangutan).